We begin with the raw amino-acid sequence, 124 residues long: MDSSKEPEPTGEFKCQLCGLTAPYTYYGQKPPNTHSIVILEDSYVMKDPFTPDKEKFLILGSLCSLCRRAVCVGAECSLFYTKRFCLPCVNENLQAFPLEIQEDMDKRKPQSKCLTRKKKDSRT.

The disordered stretch occupies residues 105–124 (MDKRKPQSKCLTRKKKDSRT). The segment covering 115 to 124 (LTRKKKDSRT) has biased composition (basic residues).

This sequence belongs to the CDPF1 family.

The sequence is that of Cysteine-rich DPF motif domain-containing protein 1 (CDPF1) from Gallus gallus (Chicken).